The following is a 329-amino-acid chain: Vomeronasal type-1 receptor 43 (329 aa).

The Extracellular segment spans residues 1 to 32 (MSKILFFSPCSLFSHTMNKNSRLHTNSNIGNT). A helical membrane pass occupies residues 33-53 (FFSEIGIGITGNSFLLLYHIL). At 54–65 (KFIRGHRPRLTD) the chain is on the cytoplasmic side. The helical transmembrane segment at 66–86 (LPIGLLSLIHLLMLLVAAFIA) threads the bilayer. Residues 87–109 (TDIFISRRGWDDIICKFLVYLYR) are Extracellular-facing. Residues Cys-101 and Cys-188 are joined by a disulfide bond. A helical transmembrane segment spans residues 110 to 130 (VLRGLSLCTTSMLSVLQAIIL). The Cytoplasmic portion of the chain corresponds to 131–147 (SPRSSCLSKFKHISLHH). A helical transmembrane segment spans residues 148–168 (ILCAILFLSVLYMLISSQLLV). At 169–209 (SIIATPNLTTNDLTYVTQSCSILPLSYLVESINSTLLAIRE) the chain is on the extracellular side. N-linked (GlcNAc...) asparagine glycosylation is found at Asn-175 and Asn-201. Residues 210–230 (YFLISLMFLSTWYIVALLCMH) traverse the membrane as a helical segment. The Cytoplasmic portion of the chain corresponds to 231–255 (RKQTQHLQETRLSLKKSPEQSATQT). Residues 256–276 (ILMLMTFFVLMTIYDNIVSCL) form a helical membrane-spanning segment. The Extracellular segment spans residues 277 to 285 (RTMLLNDPT). The helical transmembrane segment at 286-306 (SYSIELFMIHIYATVSPFVFM) threads the bilayer. Over 307–329 (SNEKHIVNFLRSMGKRMINLNLH) the chain is Cytoplasmic.

It belongs to the G-protein coupled receptor 1 family.

It localises to the cell membrane. Functionally, putative pheromone receptor implicated in the regulation of social and reproductive behavior. This Mus musculus (Mouse) protein is Vomeronasal type-1 receptor 43 (Vmn1r43).